A 177-amino-acid polypeptide reads, in one-letter code: Large ribosomal subunit protein uL6 (177 aa).

It belongs to the universal ribosomal protein uL6 family. In terms of assembly, part of the 50S ribosomal subunit.

Functionally, this protein binds to the 23S rRNA, and is important in its secondary structure. It is located near the subunit interface in the base of the L7/L12 stalk, and near the tRNA binding site of the peptidyltransferase center. The protein is Large ribosomal subunit protein uL6 of Aeromonas salmonicida (strain A449).